We begin with the raw amino-acid sequence, 545 residues long: Chaperonin GroEL (545 aa).

ATP-binding positions include 31–34 (TLGP), 88–92 (DGTTT), G415, 478–480 (NAA), and D494.

This sequence belongs to the chaperonin (HSP60) family. In terms of assembly, forms a cylinder of 14 subunits composed of two heptameric rings stacked back-to-back. Interacts with the co-chaperonin GroES.

The protein resides in the cytoplasm. It catalyses the reaction ATP + H2O + a folded polypeptide = ADP + phosphate + an unfolded polypeptide.. Together with its co-chaperonin GroES, plays an essential role in assisting protein folding. The GroEL-GroES system forms a nano-cage that allows encapsulation of the non-native substrate proteins and provides a physical environment optimized to promote and accelerate protein folding. This is Chaperonin GroEL from Streptococcus pyogenes serotype M4 (strain MGAS10750).